The primary structure comprises 176 residues: Ferritin heavy chain B (176 aa).

Positions 7–156 constitute a Ferritin-like diiron domain; it reads QNFNSDCEAA…DYITNLKRLG (150 aa). Fe cation is bound by residues Glu-24, Glu-59, His-62, Glu-104, and Gln-138.

It belongs to the ferritin family. As to quaternary structure, oligomer of 24 subunits. There are two types of subunits: L (light) chain and H (heavy) chain. The functional molecule is roughly spherical and contains a central cavity into which the insoluble mineral iron core is deposited.

Its subcellular location is the cytoplasm. It carries out the reaction 4 Fe(2+) + O2 + 4 H(+) = 4 Fe(3+) + 2 H2O. Its function is as follows. Stores iron in a soluble, non-toxic, readily available form. Important for iron homeostasis. Has ferroxidase activity. Iron is taken up in the ferrous form and deposited as ferric hydroxides after oxidation. This Xenopus laevis (African clawed frog) protein is Ferritin heavy chain B (fth1-b).